The primary structure comprises 346 residues: Selenocysteine Se-methyltransferase (346 aa).

In terms of domain architecture, Hcy-binding spans 13–330 (SMKELLKETG…TTIRAIHKRL (318 aa)). Zn(2+) is bound by residues Cys-248, Cys-315, and Cys-316.

Zn(2+) is required as a cofactor. Expressed in roots, young leaves and florets, but not detected in plants not exposed to selenium.

It catalyses the reaction S-methyl-L-methionine + L-selenocysteine = Se-methyl-L-selenocysteine + L-methionine + H(+). With respect to regulation, inhibited by L-methionine. Functionally, catalyzes the methylation of DL- and L-selenocysteine with S-methylmethionine as donor. Also methylates DL-homocysteine, DL- and L-cysteine in vitro. May be involved in selenium detoxification. The protein is Selenocysteine Se-methyltransferase (SMT) of Brassica oleracea var. italica (Broccoli).